A 585-amino-acid polypeptide reads, in one-letter code: MDNNKKQVIPRSQYRRKRREYFHNVEREERIRREKIEKENQAKREQHQTKVNEERVKDNLRKARIEKLTQEEIHQQRDDKSYKQKTLNQNNQMNKSKDDDNKIGEESLHDVRVSSDTSTLPHQNKSIKDYDDSGNESKQHTKLTSKESMLGVNSNHTEQDSRSTQPYSSKHSYSQPKDKDNDNTQQAQFLKKEDKQRNRAENIKKVNEFKQLVVAFFKEHWPKMLIIIGIIVLLLILNAIFTTVNKNDHTNDSAFNGTAKDETTAMKIAENSVKSVVTVENDLSNDTTVSDNKNESDNEIGSGVVYKKVGDSIYIFTNAHVVGDQEKQKVTYGNDKSVTGKVIGKDKWSDLAVVKAKVADENIKPMTMGDSNNIKLAEPILVIGNPLGTDFKGSVSQGIVSGLNRHVPVDIDKNDNYDALMKAFQIDAPVNPGNSGGAVVDRDGRLIGIVSLKIDMHNVEGMAFAIPINDVRKIAKELEHKGKVNYPNTEIKIKNVGDLDDSERNAINLPAKVNHGVLIGEVKENGLGDKAGLKKGDVIVELDGKKIEDNLRYRQVIYSHYDDQKTITAKIYRNGAEKNIKIKLK.

Positions 1–184 (MDNNKKQVIP…QPKDKDNDNT (184 aa)) are disordered. Residues 21–82 (YFHNVEREER…IHQQRDDKSY (62 aa)) show a composition bias toward basic and acidic residues. Residues 84-94 (QKTLNQNNQMN) are compositionally biased toward polar residues. The segment covering 95–113 (KSKDDDNKIGEESLHDVRV) has biased composition (basic and acidic residues). The span at 114 to 124 (SSDTSTLPHQN) shows a compositional bias: polar residues. Over residues 126–139 (SIKDYDDSGNESKQ) the composition is skewed to basic and acidic residues. The segment covering 151 to 175 (GVNSNHTEQDSRSTQPYSSKHSYSQ) has biased composition (polar residues). The helical transmembrane segment at 224–244 (MLIIIGIIVLLLILNAIFTTV) threads the bilayer. Active-site charge relay system residues include histidine 320, aspartate 350, and serine 435. A PDZ domain is found at 516 to 575 (GVLIGEVKENGLGDKAGLKKGDVIVELDGKKIEDNLRYRQVIYSHYDDQKTITAKIYRNG).

It belongs to the peptidase S1C family.

It localises to the cell membrane. The sequence is that of Serine protease HtrA-like from Staphylococcus epidermidis (strain ATCC 35984 / DSM 28319 / BCRC 17069 / CCUG 31568 / BM 3577 / RP62A).